The primary structure comprises 227 residues: Cytochrome c oxidase subunit 2 (227 aa).

Over 1–14 (MPYPMQLGFQDATS) the chain is Mitochondrial intermembrane. Residues 15-45 (PIMEELTYFHDHTLMIVFLISSLVLYIIILM) traverse the membrane as a helical segment. Residues 46–59 (LTTKLTHTSTMDAQ) lie on the Mitochondrial matrix side of the membrane. A helical transmembrane segment spans residues 60 to 87 (EVETIWTILPAVILVLIALPSLRILYMM). The Mitochondrial intermembrane segment spans residues 88-227 (DEIYNPYLTI…YFEKWSSMMQ (140 aa)). Residues His161, Cys196, Glu198, Cys200, His204, and Met207 each contribute to the Cu cation site. Glu198 provides a ligand contact to Mg(2+). At Tyr218 the chain carries Phosphotyrosine.

The protein belongs to the cytochrome c oxidase subunit 2 family. Component of the cytochrome c oxidase (complex IV, CIV), a multisubunit enzyme composed of 14 subunits. The complex is composed of a catalytic core of 3 subunits MT-CO1, MT-CO2 and MT-CO3, encoded in the mitochondrial DNA, and 11 supernumerary subunits COX4I, COX5A, COX5B, COX6A, COX6B, COX6C, COX7A, COX7B, COX7C, COX8 and NDUFA4, which are encoded in the nuclear genome. The complex exists as a monomer or a dimer and forms supercomplexes (SCs) in the inner mitochondrial membrane with NADH-ubiquinone oxidoreductase (complex I, CI) and ubiquinol-cytochrome c oxidoreductase (cytochrome b-c1 complex, complex III, CIII), resulting in different assemblies (supercomplex SCI(1)III(2)IV(1) and megacomplex MCI(2)III(2)IV(2)). Found in a complex with TMEM177, COA6, COX18, COX20, SCO1 and SCO2. Interacts with TMEM177 in a COX20-dependent manner. Interacts with COX20. Interacts with COX16. Cu cation is required as a cofactor.

It localises to the mitochondrion inner membrane. The enzyme catalyses 4 Fe(II)-[cytochrome c] + O2 + 8 H(+)(in) = 4 Fe(III)-[cytochrome c] + 2 H2O + 4 H(+)(out). In terms of biological role, component of the cytochrome c oxidase, the last enzyme in the mitochondrial electron transport chain which drives oxidative phosphorylation. The respiratory chain contains 3 multisubunit complexes succinate dehydrogenase (complex II, CII), ubiquinol-cytochrome c oxidoreductase (cytochrome b-c1 complex, complex III, CIII) and cytochrome c oxidase (complex IV, CIV), that cooperate to transfer electrons derived from NADH and succinate to molecular oxygen, creating an electrochemical gradient over the inner membrane that drives transmembrane transport and the ATP synthase. Cytochrome c oxidase is the component of the respiratory chain that catalyzes the reduction of oxygen to water. Electrons originating from reduced cytochrome c in the intermembrane space (IMS) are transferred via the dinuclear copper A center (CU(A)) of subunit 2 and heme A of subunit 1 to the active site in subunit 1, a binuclear center (BNC) formed by heme A3 and copper B (CU(B)). The BNC reduces molecular oxygen to 2 water molecules using 4 electrons from cytochrome c in the IMS and 4 protons from the mitochondrial matrix. This is Cytochrome c oxidase subunit 2 (MT-CO2) from Osphranter robustus (Wallaroo).